The sequence spans 450 residues: Tubulin alpha-5 chain (450 aa).

The GTP site is built by glutamine 11, glutamate 71, glycine 144, threonine 145, threonine 179, asparagine 206, and asparagine 228. Position 71 (glutamate 71) interacts with Mg(2+). The active site involves glutamate 254.

It belongs to the tubulin family. Dimer of alpha and beta chains. A typical microtubule is a hollow water-filled tube with an outer diameter of 25 nm and an inner diameter of 15 nM. Alpha-beta heterodimers associate head-to-tail to form protofilaments running lengthwise along the microtubule wall with the beta-tubulin subunit facing the microtubule plus end conferring a structural polarity. Microtubules usually have 13 protofilaments but different protofilament numbers can be found in some organisms and specialized cells. Mg(2+) is required as a cofactor. In terms of processing, undergoes a tyrosination/detyrosination cycle, the cyclic removal and re-addition of a C-terminal tyrosine residue by the enzymes tubulin tyrosine carboxypeptidase (TTCP) and tubulin tyrosine ligase (TTL), respectively.

Its subcellular location is the cytoplasm. The protein localises to the cytoskeleton. It catalyses the reaction GTP + H2O = GDP + phosphate + H(+). Functionally, tubulin is the major constituent of microtubules, a cylinder consisting of laterally associated linear protofilaments composed of alpha- and beta-tubulin heterodimers. Microtubules grow by the addition of GTP-tubulin dimers to the microtubule end, where a stabilizing cap forms. Below the cap, tubulin dimers are in GDP-bound state, owing to GTPase activity of alpha-tubulin. This is Tubulin alpha-5 chain (TUBA5) from Zea mays (Maize).